We begin with the raw amino-acid sequence, 124 residues long: Small ribosomal subunit protein uS12 (124 aa).

Asp89 carries the post-translational modification 3-methylthioaspartic acid.

The protein belongs to the universal ribosomal protein uS12 family. Part of the 30S ribosomal subunit. Contacts proteins S8 and S17. May interact with IF1 in the 30S initiation complex.

Functionally, with S4 and S5 plays an important role in translational accuracy. Its function is as follows. Interacts with and stabilizes bases of the 16S rRNA that are involved in tRNA selection in the A site and with the mRNA backbone. Located at the interface of the 30S and 50S subunits, it traverses the body of the 30S subunit contacting proteins on the other side and probably holding the rRNA structure together. The combined cluster of proteins S8, S12 and S17 appears to hold together the shoulder and platform of the 30S subunit. The chain is Small ribosomal subunit protein uS12 from Arthrobacter sp. (strain FB24).